Here is a 1228-residue protein sequence, read N- to C-terminus: Membrane-anchored lipid-binding protein LAM1 (1228 aa).

The Cytoplasmic portion of the chain corresponds to 1 to 1062; it reads MHEHKAELRL…IFKCFSKVNK (1062 aa). A PH domain is found at 308 to 421; that stretch reads EKGLSGWLYM…WINTLTSHKR (114 aa). A VASt domain is found at 773–978; the sequence is EAWCYFQDNF…KTREYLKKFN (206 aa). A helical membrane pass occupies residues 1063 to 1083; the sequence is TLYYCLLISAVTNLFFVGKSI. Topologically, residues 1084 to 1228 are lumenal; that stretch reads HSYFSVKSAE…EYNRLSAIPV (145 aa). A glycan (N-linked (GlcNAc...) asparagine) is linked at Asn-1205.

This sequence belongs to the SIP3 family.

The protein resides in the mitochondrion membrane. It is found in the endoplasmic reticulum membrane. Functionally, involved in mitochondrial fragmentation during programmed cell death in response to high levels of alpha-factor mating pheromone or the drug amiodarone. May be involved in sterol transfer between intracellular membranes. The sequence is that of Membrane-anchored lipid-binding protein LAM1 from Saccharomyces cerevisiae (strain ATCC 204508 / S288c) (Baker's yeast).